The chain runs to 622 residues: Leucine-rich repeat and immunoglobulin-like domain-containing nogo receptor-interacting protein 1-B (622 aa).

An N-terminal signal peptide occupies residues 1 to 43; that stretch reads MTFLQVTIKMVAREASGHSYLVACWQPILILMLGTVLSGSATG. Intrachain disulfides connect cysteine 44–cysteine 50 and cysteine 48–cysteine 59. The region spanning 44–73 is the LRRNT domain; the sequence is CPSRCECSAQERSVVCHRRKLITLPEGIPI. Residues 44 to 563 are Extracellular-facing; sequence CPSRCECSAQ…FDMKTLIIAT (520 aa). 11 LRR repeats span residues 74-95, 98-119, 122-143, 146-167, 170-191, 194-215, 218-239, 266-287, 290-311, 314-335, and 338-359; these read DTRL…EFLN, QLED…AFSN, GLRT…VFTG, NLTR…MFQE, NLKE…AFHG, SLEQ…AFSH, NLLT…SFRR, NITT…AIQH, YLRF…KMHN, RLQA…SFKG, and YLRV…AFHS. Asparagine 146 carries N-linked (GlcNAc...) asparagine glycosylation. Asparagine 204 carries an N-linked (GlcNAc...) asparagine glycan. Asparagine 266, asparagine 276, and asparagine 295 each carry an N-linked (GlcNAc...) asparagine glycan. Residue asparagine 343 is glycosylated (N-linked (GlcNAc...) asparagine). An LRRCT domain is found at 371 to 425; the sequence is NPLACDCRLLWVFRRRWRLNFNRQQPSCETPEFLQGKEFKDFPDVLPPNYFTCQK. 3 disulfide bridges follow: cysteine 375–cysteine 398, cysteine 377–cysteine 423, and cysteine 448–cysteine 499. An Ig-like C2-type domain is found at 413 to 515; it reads PDVLPPNYFT…GNDTRLAHLH (103 aa). N-linked (GlcNAc...) asparagine glycosylation is found at asparagine 494, asparagine 507, asparagine 528, and asparagine 544. A helical transmembrane segment spans residues 564–584; it reads TMGFISFLGVVLFCLVLLFLW. The Cytoplasmic portion of the chain corresponds to 585-622; the sequence is SRGKGNAKPNIEIEYVPRKVDGENSPNEGSHKISMKMI.

Its subcellular location is the cell membrane. Its function is as follows. May play a role in regulating axonal regeneration and plasticity in the adult central nervous system. The protein is Leucine-rich repeat and immunoglobulin-like domain-containing nogo receptor-interacting protein 1-B (lingo1b) of Danio rerio (Zebrafish).